The sequence spans 265 residues: Acyl-[acyl-carrier-protein]--UDP-N-acetylglucosamine O-acyltransferase (265 aa).

This sequence belongs to the transferase hexapeptide repeat family. LpxA subfamily. Homotrimer.

It localises to the cytoplasm. It carries out the reaction a (3R)-hydroxyacyl-[ACP] + UDP-N-acetyl-alpha-D-glucosamine = a UDP-3-O-[(3R)-3-hydroxyacyl]-N-acetyl-alpha-D-glucosamine + holo-[ACP]. It participates in glycolipid biosynthesis; lipid IV(A) biosynthesis; lipid IV(A) from (3R)-3-hydroxytetradecanoyl-[acyl-carrier-protein] and UDP-N-acetyl-alpha-D-glucosamine: step 1/6. Functionally, involved in the biosynthesis of lipid A, a phosphorylated glycolipid that anchors the lipopolysaccharide to the outer membrane of the cell. The polypeptide is Acyl-[acyl-carrier-protein]--UDP-N-acetylglucosamine O-acyltransferase (Polynucleobacter asymbioticus (strain DSM 18221 / CIP 109841 / QLW-P1DMWA-1) (Polynucleobacter necessarius subsp. asymbioticus)).